Reading from the N-terminus, the 177-residue chain is ATP synthase subunit delta (177 aa).

This sequence belongs to the ATPase delta chain family. F-type ATPases have 2 components, F(1) - the catalytic core - and F(0) - the membrane proton channel. F(1) has five subunits: alpha(3), beta(3), gamma(1), delta(1), epsilon(1). F(0) has three main subunits: a(1), b(2) and c(10-14). The alpha and beta chains form an alternating ring which encloses part of the gamma chain. F(1) is attached to F(0) by a central stalk formed by the gamma and epsilon chains, while a peripheral stalk is formed by the delta and b chains.

The protein localises to the cell inner membrane. Functionally, f(1)F(0) ATP synthase produces ATP from ADP in the presence of a proton or sodium gradient. F-type ATPases consist of two structural domains, F(1) containing the extramembraneous catalytic core and F(0) containing the membrane proton channel, linked together by a central stalk and a peripheral stalk. During catalysis, ATP synthesis in the catalytic domain of F(1) is coupled via a rotary mechanism of the central stalk subunits to proton translocation. In terms of biological role, this protein is part of the stalk that links CF(0) to CF(1). It either transmits conformational changes from CF(0) to CF(1) or is implicated in proton conduction. This Pasteurella multocida (strain Pm70) protein is ATP synthase subunit delta.